We begin with the raw amino-acid sequence, 354 residues long: S-adenosylmethionine:tRNA ribosyltransferase-isomerase (354 aa).

Belongs to the QueA family. In terms of assembly, monomer.

It is found in the cytoplasm. The enzyme catalyses 7-aminomethyl-7-carbaguanosine(34) in tRNA + S-adenosyl-L-methionine = epoxyqueuosine(34) in tRNA + adenine + L-methionine + 2 H(+). Its pathway is tRNA modification; tRNA-queuosine biosynthesis. Its function is as follows. Transfers and isomerizes the ribose moiety from AdoMet to the 7-aminomethyl group of 7-deazaguanine (preQ1-tRNA) to give epoxyqueuosine (oQ-tRNA). The chain is S-adenosylmethionine:tRNA ribosyltransferase-isomerase from Salmonella dublin (strain CT_02021853).